A 540-amino-acid polypeptide reads, in one-letter code: MGERVLRVLTCGDVYGRFDVLFNRVRVIQKKSGQFDMLLCVGSFFGTSPESQTHWDEYKSGAKKAPIQTYVLGANNQETVKHFKDVDGCELAANITYLGRKGLFTGASGLQIAYLSGIESSSEPAPAYCFTAKDVTSLKMSLMSNSKFKGVDILLTSSWPKDVSNYGNALPNEASKKCGSALISNLAFNLKPRYHFAALEGENYERLPYRNHLVLQENAQHVSRFISLASVGNLDKKKYIYAFNIVPMSLTDIADLVKQPLDVTENPYRKSDKDTPKSKGNKSAEEEEPTQQFFFDLNKPQGKKRQTDGKGGRQSQAKQPRKHPQPTGPCWFCLASPEVEKHLVVSIGDNCYVALAKGGLMSDHVLILPIGHYQSTVDLSSDVVKEVEQYKAALRTFFKTKGKRYVMFERNYKSQHLQLQVVPLPLSCCTTEDIKETFILQAQEQGMELLEIPEHSDIKQIAQPGTPYFYVELDSGEKLFHRIKKHFPLQFGREVLASEAILNIPTRADWKDCKSSRAEEEDLTKTFRDAFEPFDFTLQD.

Residues 265–326 are disordered; that stretch reads ENPYRKSDKD…AKQPRKHPQP (62 aa). Residues 267 to 277 show a composition bias toward basic and acidic residues; it reads PYRKSDKDTPK.

It belongs to the CWF19 family.

The chain is CWF19-like protein 1 (cwf19l1) from Xenopus laevis (African clawed frog).